The following is a 716-amino-acid chain: MQLERAAFSDPFSFLGPQYQSKGIALRVWMPGAVSMVVEIENGEKFPLTREDESGFVLISKMDLTAAVYKLHISWPTGEQTIHDPYQFHGFMPSGDALVSPSKMHSEMGAQLISLNKGGQPISGVRFLTYAPNASAVSVIGEFNAWDGRRHPMQRLDDGLWGLFIPDLEDGTQYKFELKDSSGNSLPHKADPWGYSSEQYPSFTSIVYDQSRYQWQDKAWQTRPVSVKHQEALSFYELHAGSWRRNEQGDFLTYRELAEQLIPYLSEMGYTHLELMPVSEHPFYGSWGYQPIGLFSPTSRFGTPDDFKYFVDQCHLAGIGVVLDWVPAHFPSDDHGLANFDGTALFNDPDPRRGWHQDWKSYIYDYGRDHVRRFLISNALFWLEHYHIDGLRVDAVASMLYLDYSREHDQWIPNHDGGNQNYDAISLLRWMNEEVYSHYPNAMTIAEESTAFSGVSRPTDMGGLGFGFKWNMGWMHDSLSYIQEEPVHRKFHHNTITFPLIYAFSENYVLSLSHDEVVYGKGSLLDKMPGDEWQKSANLRTYMGYMYGQPGKKLNFMGAEIAQSAEWSHDGQLEWHWLEYPRHNGMKKLVSDLNHLYQDLPALHELDCSPEGFEWRVQDDAETSVLAHERFALNGDKVLVVSNFTPVPREGYTLGVPAEGEYEVLLNTDAEKYWGSGTPIQQTVKTQLLEKHGLAQSISLDLPPLSTVFLAFKQHA.

Asp-394 (nucleophile) is an active-site residue. Residue Glu-447 is the Proton donor of the active site.

Belongs to the glycosyl hydrolase 13 family. GlgB subfamily. As to quaternary structure, monomer.

The catalysed reaction is Transfers a segment of a (1-&gt;4)-alpha-D-glucan chain to a primary hydroxy group in a similar glucan chain.. Its pathway is glycan biosynthesis; glycogen biosynthesis. Its function is as follows. Catalyzes the formation of the alpha-1,6-glucosidic linkages in glycogen by scission of a 1,4-alpha-linked oligosaccharide from growing alpha-1,4-glucan chains and the subsequent attachment of the oligosaccharide to the alpha-1,6 position. The sequence is that of 1,4-alpha-glucan branching enzyme GlgB from Photobacterium profundum (strain SS9).